Here is a 271-residue protein sequence, read N- to C-terminus: Shikimate kinase (271 aa).

Residue 83–93 (PIAMGLKSSSA) participates in ATP binding.

Belongs to the GHMP kinase family. Archaeal shikimate kinase subfamily.

It is found in the cytoplasm. The enzyme catalyses shikimate + ATP = 3-phosphoshikimate + ADP + H(+). Its pathway is metabolic intermediate biosynthesis; chorismate biosynthesis; chorismate from D-erythrose 4-phosphate and phosphoenolpyruvate: step 5/7. This is Shikimate kinase from Thermococcus kodakarensis (strain ATCC BAA-918 / JCM 12380 / KOD1) (Pyrococcus kodakaraensis (strain KOD1)).